The primary structure comprises 517 residues: Cytochrome P450 52A8 (517 aa).

Cys464 serves as a coordination point for heme.

This sequence belongs to the cytochrome P450 family. Requires heme as cofactor.

Functionally, together with an NADPH cytochrome P450 the enzyme system catalyzes the terminal hydroxylation as the first step in the assimilation of alkanes and fatty acids. Preferentially hydroxylates lauric acid. This chain is Cytochrome P450 52A8 (CYP52A8), found in Candida tropicalis (Yeast).